The primary structure comprises 208 residues: Large ribosomal subunit protein uL3 (208 aa).

The segment at 116 to 148 (GFQGVIKRHGQSRGPMAHGSRYHRRPGSMGPVA) is disordered.

It belongs to the universal ribosomal protein uL3 family. In terms of assembly, part of the 50S ribosomal subunit. Forms a cluster with proteins L14 and L19.

Functionally, one of the primary rRNA binding proteins, it binds directly near the 3'-end of the 23S rRNA, where it nucleates assembly of the 50S subunit. In Streptococcus agalactiae serotype Ia (strain ATCC 27591 / A909 / CDC SS700), this protein is Large ribosomal subunit protein uL3.